We begin with the raw amino-acid sequence, 553 residues long: CDP-diacylglycerol--glycerol-3-phosphate 3-phosphatidyltransferase, mitochondrial (553 aa).

The transit peptide at 1–25 (MAAPAAGPVFWRRLLGLLPGRPGLA) directs the protein to the mitochondrion. S46 carries the phosphoserine modification. Position 121–128 (121–128 (ASLYLGTG)) interacts with ATP. 2 consecutive PLD phosphodiesterase domains span residues 212–238 (TIGL…SDSY) and 457–490 (RGWT…GYRS). Catalysis depends on residues H217, K219, and D224.

This sequence belongs to the CDP-alcohol phosphatidyltransferase class-II family. In terms of tissue distribution, widely expressed with higher expression in testis, liver and brain.

It localises to the mitochondrion. The catalysed reaction is a CDP-1,2-diacyl-sn-glycerol + sn-glycerol 3-phosphate = a 1,2-diacyl-sn-glycero-3-phospho-(1'-sn-glycero-3'-phosphate) + CMP + H(+). The protein operates within phospholipid metabolism; phosphatidylglycerol biosynthesis; phosphatidylglycerol from CDP-diacylglycerol: step 1/2. With respect to regulation, activated by calcium and magnesium and inhibited by other bivalent cations. Functionally, functions in the biosynthesis of the anionic phospholipids phosphatidylglycerol and cardiolipin. This chain is CDP-diacylglycerol--glycerol-3-phosphate 3-phosphatidyltransferase, mitochondrial (Pgs1), found in Mus musculus (Mouse).